Here is a 333-residue protein sequence, read N- to C-terminus: Adenosine deaminase (333 aa).

Residues histidine 12 and histidine 14 each contribute to the Zn(2+) site. The substrate site is built by histidine 14, aspartate 16, and glycine 170. Residue histidine 197 participates in Zn(2+) binding. Glutamate 200 serves as the catalytic Proton donor. Aspartate 278 serves as a coordination point for Zn(2+). Substrate is bound at residue aspartate 279.

Belongs to the metallo-dependent hydrolases superfamily. Adenosine and AMP deaminases family. Adenosine deaminase subfamily. Requires Zn(2+) as cofactor.

The catalysed reaction is adenosine + H2O + H(+) = inosine + NH4(+). It catalyses the reaction 2'-deoxyadenosine + H2O + H(+) = 2'-deoxyinosine + NH4(+). Catalyzes the hydrolytic deamination of adenosine and 2-deoxyadenosine. The sequence is that of Adenosine deaminase from Escherichia coli O45:K1 (strain S88 / ExPEC).